Here is a 385-residue protein sequence, read N- to C-terminus: MAPSISPVTQPLVSMAIAPTVVIRSALAKAGEHLQKLGSKGLVVTGSHSAELGEKSLQTLQKNYGLTLPLASYLPDCAESSLEQLRRRVHQEQPDFILGIGGGKALDTAKLLAHQTQLAIATVPTSAATCAGWTALANVYSETGAFRYDVALDRCPDLLIVDYELIQRAEPRLLVAGIGDAIAKWYEASVSSGQSSDTFTVAAVQQARILRDILFQKSAEALAQPGSETWREVVDASLLMAGVIGGLGGANCRTVAAHAVHNGLTQLPQAHHALHGEKVAYGILVQLRLEELVSGNQLAATARRQLLSFYDEIGLPKTLQDLGLGRISLEELRQTAEFTCLPNSDIHRLPFTVTPETLMAAMVSTLVEEQGTRQLFAQIQDNSGL.

Zn(2+) is bound by residues D180, H258, and H275.

It belongs to the iron-containing alcohol dehydrogenase family. The cofactor is Zn(2+).

This is an uncharacterized protein from Synechocystis sp. (strain ATCC 27184 / PCC 6803 / Kazusa).